We begin with the raw amino-acid sequence, 388 residues long: Deoxyuridine 5'-triphosphate nucleotidohydrolase (388 aa).

Positions Glu-77–Glu-88 are enriched in basic and acidic residues. Disordered regions lie at residues Glu-77–Pro-96 and Thr-336–Pro-388. Over residues Val-351–Lys-363 the composition is skewed to acidic residues.

The protein belongs to the dUTPase family. Mg(2+) serves as cofactor.

It catalyses the reaction dUTP + H2O = dUMP + diphosphate + H(+). It participates in pyrimidine metabolism; dUMP biosynthesis; dUMP from dCTP (dUTP route): step 2/2. Involved in nucleotide metabolism: produces dUMP, the immediate precursor of thymidine nucleotides and decreases the intracellular concentration of dUTP to avoid uracil incorporation into viral DNA. This chain is Deoxyuridine 5'-triphosphate nucleotidohydrolase, found in Homo sapiens (Human).